The following is a 263-amino-acid chain: tRNA pseudouridine synthase A (263 aa).

Asp51 functions as the Nucleophile in the catalytic mechanism. Tyr109 is a binding site for substrate.

Belongs to the tRNA pseudouridine synthase TruA family. As to quaternary structure, homodimer.

It catalyses the reaction uridine(38/39/40) in tRNA = pseudouridine(38/39/40) in tRNA. Its function is as follows. Formation of pseudouridine at positions 38, 39 and 40 in the anticodon stem and loop of transfer RNAs. This is tRNA pseudouridine synthase A from Mannheimia succiniciproducens (strain KCTC 0769BP / MBEL55E).